Consider the following 379-residue polypeptide: tRNA-specific 2-thiouridylase MnmA (379 aa).

ATP-binding positions include 9 to 16 (AMSGGVDS) and methionine 35. The interval 94–96 (NPD) is interaction with target base in tRNA. The active-site Nucleophile is the cysteine 99. A disulfide bond links cysteine 99 and cysteine 195. Glycine 123 contacts ATP. Positions 145–147 (KDQ) are interaction with tRNA. Cysteine 195 (cysteine persulfide intermediate) is an active-site residue. The interval 307–308 (RY) is interaction with tRNA.

The protein belongs to the MnmA/TRMU family.

The protein localises to the cytoplasm. It catalyses the reaction S-sulfanyl-L-cysteinyl-[protein] + uridine(34) in tRNA + AH2 + ATP = 2-thiouridine(34) in tRNA + L-cysteinyl-[protein] + A + AMP + diphosphate + H(+). Functionally, catalyzes the 2-thiolation of uridine at the wobble position (U34) of tRNA, leading to the formation of s(2)U34. The sequence is that of tRNA-specific 2-thiouridylase MnmA from Xylella fastidiosa (strain M12).